We begin with the raw amino-acid sequence, 485 residues long: uncharacterized protein (485 aa).

11 consecutive transmembrane segments (helical) span residues 79-99, 117-137, 139-159, 170-190, 199-219, 275-295, 313-333, 355-375, 380-400, 421-441, and 448-468; these read LVTL…LIFA, VFAL…FLVF, FFSG…LADL, VIYF…SGFI, WEFW…FLLL, ILIC…LVLI, GLMY…AMPI, LPMG…FGWT, IFWF…IMTS, GVKI…ESLF, and WGCT…PILF.

This sequence belongs to the major facilitator superfamily. CAR1 family.

It localises to the golgi apparatus. The protein resides in the membrane. This is an uncharacterized protein from Schizosaccharomyces pombe (strain 972 / ATCC 24843) (Fission yeast).